We begin with the raw amino-acid sequence, 316 residues long: Putative metal-binding protein TP_0034 (316 aa).

Positions 1-19 are cleaved as a signal peptide; the sequence is MQRCSVVAALAGVVFLAQA. A divalent metal cation is bound by residues H68, H146, and H210.

This sequence belongs to the bacterial solute-binding protein 9 family.

The protein resides in the periplasm. Part of an ATP-binding cassette (ABC) transport system involved in metal import. Binds a metal with high affinity and specificity and delivers it to the membrane permease for translocation into the cytoplasm. The sequence is that of Putative metal-binding protein TP_0034 from Treponema pallidum (strain Nichols).